The chain runs to 732 residues: Trehalose phosphorylase (732 aa).

The propeptide occupies 1–25 (MAPPHQFQSKPSDVIRRRLSSAVSS).

This sequence belongs to the glycosyltransferase group 1 family. Glycosyltransferase 4 subfamily. In terms of assembly, homodimer.

It carries out the reaction alpha,alpha-trehalose + phosphate = alpha-D-glucose + alpha-D-glucose 1-phosphate. Its activity is regulated as follows. Activity abolished by 1 mM Cu(2+). 0.1 mM Cu(2+) reduces trehalose phosphorolysis to 76% and trehalose synthesis to 48% of maximum activity. 1 mM Zn(2+) abolishes trehalose synthesis, and reduces trehalose phosphorolysis to 40% of maximum activity. Unaffected by EDTA. In terms of biological role, reversibly catalyzes the synthesis and degradation of trehalose from glucose and alpha-D-glucose 1-phosphate. The equilibrium lies in the direction of trehalose synthesis. This Grifola frondosa (Maitake) protein is Trehalose phosphorylase.